The chain runs to 1113 residues: Poly(A) RNA polymerase gld-2 (1113 aa).

4 disordered regions span residues 1-113 (MVMA…PKYH), 134-175 (RPIF…PTQP), 205-266 (LYRS…GQDP), and 445-513 (LDDE…DEST). Over residues 22-52 (SPSVDSVSRVQQQSGGFAFYNQQSNHQYQQS) the composition is skewed to low complexity. A compositionally biased stretch (polar residues) spans 60 to 106 (SRDGNTGYYNNHSGNKRQTYNNQRGGRSYNHRGNSNYQQNGEYSGNQ). Low complexity predominate over residues 149 to 172 (RRSSPPSPSALSSSTANSTSNRAP). Residues 223–233 (YKQPPPQPPST) show a composition bias toward pro residues. The segment covering 451 to 485 (GADHDKTIDENRRRIHKSQEPRIGTEEKALNELPR) has biased composition (basic and acidic residues). Low complexity predominate over residues 492-507 (SSCSSISSVSESSSPS). Mg(2+) contacts are provided by D606 and D608. One can recognise a PAP-associated domain in the interval 780–816 (TLGELLIGFLDYYANEFNYDRDAISIRQGRRVERAAL). Disordered stretches follow at residues 817–854 (AVRP…GIPM) and 966–1113 (GPGH…NVSQ). Positions 972 to 994 (YQQQSNQNLSRPQRPGSNQGYQM) are enriched in polar residues. Low complexity-rich tracts occupy residues 995 to 1035 (NNNR…SRSN) and 1044 to 1061 (QQNS…KENV). Basic and acidic residues predominate over residues 1069–1084 (VDKKQQNSNRKDDGNR).

It belongs to the DNA polymerase type-B-like family. GLD2 subfamily. Interacts with gld-3. Mg(2+) is required as a cofactor. The cofactor is Mn(2+). Germline-specific.

Its subcellular location is the cytoplasm. It carries out the reaction RNA(n) + ATP = RNA(n)-3'-adenine ribonucleotide + diphosphate. Cytoplasmic poly(A) RNA polymerase that adds successive AMP monomers to the 3'-end of specific RNAs, forming a poly(A) tail. Acts as a regulator of mitosis/meiosis required for progression through meiotic prophase during oogenesis and spermatogenesis and for promotion of the entry into meiosis from the mitotic cell cycle. May act by regulating and activating gld-1 mRNA activity in germline. Required for polyadenylation of neg-1 mRNA during embryogenesis. The chain is Poly(A) RNA polymerase gld-2 (gld-2) from Caenorhabditis elegans.